Reading from the N-terminus, the 1009-residue chain is DNA ligase 4 (1009 aa).

2 disordered regions span residues 1-34 and 51-72; these read METDQDMHDQAMAGEETDLDEKYPNRPQNKAPTL and KKKPVGPAGNRRKAGPHGLSAA. Basic residues predominate over residues 51–65; the sequence is KKKPVGPAGNRRKAG. Positions 315, 317, 318, 322, 384, 424, 484, 489, 506, and 508 each coordinate ATP. Catalysis depends on K317, which acts as the N6-AMP-lysine intermediate. Mg(2+) is bound at residue E384. E484 contributes to the Mg(2+) binding site. 2 BRCT domains span residues 715–808 and 887–995; these read PSGH…PDLL and PCGW…QHMP.

The protein belongs to the ATP-dependent DNA ligase family. It depends on Mg(2+) as a cofactor.

The protein resides in the nucleus. It catalyses the reaction ATP + (deoxyribonucleotide)n-3'-hydroxyl + 5'-phospho-(deoxyribonucleotide)m = (deoxyribonucleotide)n+m + AMP + diphosphate.. In terms of biological role, DNA ligase involved in DNA non-homologous end joining (NHEJ); required for double-strand break (DSB) repair. The chain is DNA ligase 4 (lig4) from Emericella nidulans (strain FGSC A4 / ATCC 38163 / CBS 112.46 / NRRL 194 / M139) (Aspergillus nidulans).